Here is a 450-residue protein sequence, read N- to C-terminus: Cell division cycle 20.5, cofactor of APC complex (450 aa).

7 WD repeats span residues A129–L166, E171–T210, G214–E251, G255–P294, E304–S346, E348–E389, and G392–T431.

It belongs to the WD repeat CDC20/Fizzy family. In terms of assembly, the APC/C is composed of at least 11 subunits that stay tightly associated throughout the cell cycle. Binds to GIG1 and PYM. Part of the mitotic checkpoint complex (MCC); interacts with MAD2 and BUB1.

Its subcellular location is the nucleus. It participates in protein modification; protein ubiquitination. Component of the anaphase promoting complex/cyclosome (APC/C), a cell cycle-regulated E3 ubiquitin-protein ligase complex that controls progression through mitosis and the G1 phase of the cell cycle. This is Cell division cycle 20.5, cofactor of APC complex (CDC20-5) from Arabidopsis thaliana (Mouse-ear cress).